The following is a 65-amino-acid chain: MSKIILAIFLIVLCGLIFVTVDAMIDAPCKDNDDCDRFTEYCAIYADENGNEAGKRCEDAIGLLV.

Residues 1–23 form the signal peptide; the sequence is MSKIILAIFLIVLCGLIFVTVDA.

Contains 2 disulfide bonds. In terms of tissue distribution, expressed by the venom gland.

The protein resides in the secreted. In terms of biological role, endoparasitoid venom protein that interferes with the activation of host hemolymph prophenoloxidase. May act in conjunction with other venom proteins (such as Vn50), by competitive binding to the zymogen and thereby interrupting the enzyme. This is Venom protein Vn4.6 from Cotesia rubecula (Cabbage white butterfly parasite).